Reading from the N-terminus, the 147-residue chain is Lysozyme C (147 aa).

The N-terminal stretch at 1 to 18 is a signal peptide; sequence MKFFLILGFCLLPLIAQG. Positions 19-147 constitute a C-type lysozyme domain; that stretch reads KVFQRCELAA…VSQWIRGCRV (129 aa). 4 disulfides stabilise this stretch: Cys24–Cys145, Cys48–Cys133, Cys82–Cys98, and Cys94–Cys112. Active-site residues include Glu53 and Asp70. Asp119 serves as a coordination point for substrate.

Belongs to the glycosyl hydrolase 22 family. As to quaternary structure, monomer. In terms of tissue distribution, expressed in liver and ovary. Not expressed in bone marrow, lung, spleen, intestine or oviduct.

The protein resides in the secreted. The catalysed reaction is Hydrolysis of (1-&gt;4)-beta-linkages between N-acetylmuramic acid and N-acetyl-D-glucosamine residues in a peptidoglycan and between N-acetyl-D-glucosamine residues in chitodextrins.. Functionally, lysozymes have primarily a bacteriolytic function; those in tissues and body fluids are associated with the monocyte-macrophage system and enhance the activity of immunoagents. Has bacteriolytic activity against M.luteus. This chain is Lysozyme C, found in Dromaius novaehollandiae (Emu).